We begin with the raw amino-acid sequence, 819 residues long: Pentatricopeptide repeat-containing protein At1g52620 (819 aa).

18 PPR repeats span residues 98–132 (NGFACSSFLKLLARYRIFNEIEDVLGNLRNENVKL), 133–163 (THEALSHVLHAYAESGSLSKAVEIYDYVVEL), 169–203 (DVIACNSLLSLLVKSRRLGDARKVYDEMCDRGDSV), 204–238 (DNYSTCILVKGMCNEGKVEVGRKLIEGRWGKGCIP), 239–273 (NIVFYNTIIGGYCKLGDIENAYLVFKELKLKGFMP), 274–308 (TLETFGTMINGFCKEGDFVASDRLLSEVKERGLRV), 309–343 (SVWFLNNIIDAKYRHGYKVDPAESIGWIIANDCKP), 344–378 (DVATYNILINRLCKEGKKEVAVGFLDEASKKGLIP), 379–413 (NNLSYAPLIQAYCKSKEYDIASKLLLQMAERGCKP), 414–448 (DIVTYGILIHGLVVSGHMDDAVNMKVKLIDRGVSP), 449–483 (DAAIYNMLMSGLCKTGRFLPAKLLFSEMLDRNILP), 484–518 (DAYVYATLIDGFIRSGDFDEARKVFSLSVEKGVKV), 519–553 (DVVHHNAMIKGFCRSGMLDEALACMNRMNEEHLVP), 554–588 (DKFTYSTIIDGYVKQQDMATAIKIFRYMEKNKCKP), 589–623 (NVVTYTSLINGFCCQGDFKMAEETFKEMQLRDLVP), 624–659 (NVVTYTTLIRSLAKESSTLEKAVYYWELMMTNKCVP), 709–743 (HAAAYNSALVCLCVHGMVKTACMFQDKMVKKGFSP), and 744–779 (DPVSFAAILHGFCVVGNSKQWRNMDFCNLGEKGLEV).

The protein belongs to the PPR family. P subfamily.

The sequence is that of Pentatricopeptide repeat-containing protein At1g52620 from Arabidopsis thaliana (Mouse-ear cress).